Consider the following 198-residue polypeptide: Small ribosomal subunit protein uS4 (198 aa).

Residues 88–153 (LRLDNVMFRM…AQRYKDILEV (66 aa)) form the S4 RNA-binding domain.

The protein belongs to the universal ribosomal protein uS4 family. Part of the 30S ribosomal subunit. Contacts protein S5. The interaction surface between S4 and S5 is involved in control of translational fidelity.

Its function is as follows. One of the primary rRNA binding proteins, it binds directly to 16S rRNA where it nucleates assembly of the body of the 30S subunit. In terms of biological role, with S5 and S12 plays an important role in translational accuracy. The chain is Small ribosomal subunit protein uS4 from Lachnoclostridium phytofermentans (strain ATCC 700394 / DSM 18823 / ISDg) (Clostridium phytofermentans).